The chain runs to 416 residues: S-adenosylmethionine synthase (416 aa).

Histidine 16 lines the ATP pocket. Aspartate 18 contacts Mg(2+). Glutamate 44 contacts K(+). L-methionine-binding residues include glutamate 57 and glutamine 100. A flexible loop region spans residues 100 to 110 (QSPDIAQGVTQ). Residues 175-177 (DGK), 251-252 (KF), aspartate 260, 266-267 (RK), alanine 283, and lysine 287 contribute to the ATP site. Aspartate 260 contacts L-methionine. An L-methionine-binding site is contributed by lysine 291.

This sequence belongs to the AdoMet synthase family. Homotetramer; dimer of dimers. Mg(2+) is required as a cofactor. Requires K(+) as cofactor.

It is found in the cytoplasm. The enzyme catalyses L-methionine + ATP + H2O = S-adenosyl-L-methionine + phosphate + diphosphate. It participates in amino-acid biosynthesis; S-adenosyl-L-methionine biosynthesis; S-adenosyl-L-methionine from L-methionine: step 1/1. Its function is as follows. Catalyzes the formation of S-adenosylmethionine (AdoMet) from methionine and ATP. The overall synthetic reaction is composed of two sequential steps, AdoMet formation and the subsequent tripolyphosphate hydrolysis which occurs prior to release of AdoMet from the enzyme. The sequence is that of S-adenosylmethionine synthase from Crocosphaera subtropica (strain ATCC 51142 / BH68) (Cyanothece sp. (strain ATCC 51142)).